The following is a 196-amino-acid chain: Pyridoxal 5'-phosphate synthase subunit PdxT (196 aa).

47–49 (GES) contacts L-glutamine. The active-site Nucleophile is cysteine 79. L-glutamine-binding positions include arginine 106 and 134–135 (IR). Catalysis depends on charge relay system residues histidine 170 and glutamate 172.

Belongs to the glutaminase PdxT/SNO family. In the presence of PdxS, forms a dodecamer of heterodimers. Only shows activity in the heterodimer.

It carries out the reaction aldehydo-D-ribose 5-phosphate + D-glyceraldehyde 3-phosphate + L-glutamine = pyridoxal 5'-phosphate + L-glutamate + phosphate + 3 H2O + H(+). It catalyses the reaction L-glutamine + H2O = L-glutamate + NH4(+). It participates in cofactor biosynthesis; pyridoxal 5'-phosphate biosynthesis. Functionally, catalyzes the hydrolysis of glutamine to glutamate and ammonia as part of the biosynthesis of pyridoxal 5'-phosphate. The resulting ammonia molecule is channeled to the active site of PdxS. The sequence is that of Pyridoxal 5'-phosphate synthase subunit PdxT from Halalkalibacterium halodurans (strain ATCC BAA-125 / DSM 18197 / FERM 7344 / JCM 9153 / C-125) (Bacillus halodurans).